The chain runs to 354 residues: Dihydroorotate dehydrogenase (quinone) (354 aa).

Residues 67-71 (AGFDK) and Thr91 each bind FMN. Lys71 is a binding site for substrate. A substrate-binding site is contributed by 116-120 (NRMGF). 2 residues coordinate FMN: Asn144 and Asn177. Asn177 contacts substrate. Ser180 functions as the Nucleophile in the catalytic mechanism. Asn182 contacts substrate. Lys213 and Thr241 together coordinate FMN. 242 to 243 (NT) contributes to the substrate binding site. Residues Gly265, Gly294, and 315–316 (YT) contribute to the FMN site.

Belongs to the dihydroorotate dehydrogenase family. Type 2 subfamily. Monomer. Requires FMN as cofactor.

The protein resides in the cell membrane. It catalyses the reaction (S)-dihydroorotate + a quinone = orotate + a quinol. Its pathway is pyrimidine metabolism; UMP biosynthesis via de novo pathway; orotate from (S)-dihydroorotate (quinone route): step 1/1. Its function is as follows. Catalyzes the conversion of dihydroorotate to orotate with quinone as electron acceptor. This Mycolicibacterium smegmatis (strain ATCC 700084 / mc(2)155) (Mycobacterium smegmatis) protein is Dihydroorotate dehydrogenase (quinone).